A 158-amino-acid polypeptide reads, in one-letter code: NAD(P)H-quinone oxidoreductase subunit N (158 aa).

It belongs to the complex I NdhN subunit family. NDH-1 can be composed of about 15 different subunits; different subcomplexes with different compositions have been identified which probably have different functions.

Its subcellular location is the cellular thylakoid membrane. It catalyses the reaction a plastoquinone + NADH + (n+1) H(+)(in) = a plastoquinol + NAD(+) + n H(+)(out). The enzyme catalyses a plastoquinone + NADPH + (n+1) H(+)(in) = a plastoquinol + NADP(+) + n H(+)(out). In terms of biological role, NDH-1 shuttles electrons from an unknown electron donor, via FMN and iron-sulfur (Fe-S) centers, to quinones in the respiratory and/or the photosynthetic chain. The immediate electron acceptor for the enzyme in this species is believed to be plastoquinone. Couples the redox reaction to proton translocation, and thus conserves the redox energy in a proton gradient. Cyanobacterial NDH-1 also plays a role in inorganic carbon-concentration. The chain is NAD(P)H-quinone oxidoreductase subunit N from Trichodesmium erythraeum (strain IMS101).